Reading from the N-terminus, the 170-residue chain is MKSIQVPIILVGFMGTGKTTVGKYLSDLYNLSYVDLDNFIEVNECKSIPNIFNDIGEKGFRSLETRYLKSCLNTFDIISTGGGIIEDTNSLKLLKNQKHVVWLDCDIEIIFKRVKNDSHRPNAKSKNLNQLDALYSSRLSRYNEIAFMKVDSAQSVSEICTLIKTKLLSD.

15–20 (GTGKTT) is an ATP binding site. Mg(2+) is bound at residue Thr-19. Substrate-binding residues include Asp-37, Arg-61, and Gly-82. Residue Arg-120 coordinates ATP. Arg-138 lines the substrate pocket. Residue Gln-154 participates in ATP binding.

This sequence belongs to the shikimate kinase family. As to quaternary structure, monomer. Requires Mg(2+) as cofactor.

It localises to the cytoplasm. The enzyme catalyses shikimate + ATP = 3-phosphoshikimate + ADP + H(+). It functions in the pathway metabolic intermediate biosynthesis; chorismate biosynthesis; chorismate from D-erythrose 4-phosphate and phosphoenolpyruvate: step 5/7. In terms of biological role, catalyzes the specific phosphorylation of the 3-hydroxyl group of shikimic acid using ATP as a cosubstrate. This Staphylococcus epidermidis (strain ATCC 35984 / DSM 28319 / BCRC 17069 / CCUG 31568 / BM 3577 / RP62A) protein is Shikimate kinase.